The primary structure comprises 57 residues: UPF0391 membrane protein RPD_2934 (57 aa).

The next 2 helical transmembrane spans lie at 6-26 and 35-55; these read WALIFLVISVVAGIFGFTGVS and ILFYIFAAIFIVLLILGFTIF.

It belongs to the UPF0391 family.

The protein localises to the cell membrane. The chain is UPF0391 membrane protein RPD_2934 from Rhodopseudomonas palustris (strain BisB5).